We begin with the raw amino-acid sequence, 82 residues long: Sec-independent protein translocase protein TatA (82 aa).

Residues 1–21 form a helical membrane-spanning segment; the sequence is MGIFDWKHWIVILIVVVLVFG. A disordered region spans residues 43 to 82; the sequence is VNTEEDDKKDQPAAQPAQPLNQPHTIDAQAQKVEEPARKD.

This sequence belongs to the TatA/E family. The Tat system comprises two distinct complexes: a TatABC complex, containing multiple copies of TatA, TatB and TatC subunits, and a separate TatA complex, containing only TatA subunits. Substrates initially bind to the TatABC complex, which probably triggers association of the separate TatA complex to form the active translocon.

The protein resides in the cell inner membrane. Part of the twin-arginine translocation (Tat) system that transports large folded proteins containing a characteristic twin-arginine motif in their signal peptide across membranes. TatA could form the protein-conducting channel of the Tat system. This Pseudomonas aeruginosa (strain LESB58) protein is Sec-independent protein translocase protein TatA.